We begin with the raw amino-acid sequence, 361 residues long: Nicotinate-nucleotide--dimethylbenzimidazole phosphoribosyltransferase (361 aa).

Glu315 functions as the Proton acceptor in the catalytic mechanism.

It belongs to the CobT family.

The enzyme catalyses 5,6-dimethylbenzimidazole + nicotinate beta-D-ribonucleotide = alpha-ribazole 5'-phosphate + nicotinate + H(+). The protein operates within nucleoside biosynthesis; alpha-ribazole biosynthesis; alpha-ribazole from 5,6-dimethylbenzimidazole: step 1/2. Catalyzes the synthesis of alpha-ribazole-5'-phosphate from nicotinate mononucleotide (NAMN) and 5,6-dimethylbenzimidazole (DMB). The chain is Nicotinate-nucleotide--dimethylbenzimidazole phosphoribosyltransferase from Clostridium perfringens (strain 13 / Type A).